Consider the following 358-residue polypeptide: MGDWSFLGEFLEEVHKHSTVIGKVWLTVLFIFRMLVLGTAAESSWGDEQADFRCDTIQPGCQNVCYDQAFPISHIRYWVLQIIFVSTPSLVYMGHAMHTVRMQEKQKLRDAEKAKEAHRTGAYEYPVAEKAELSCWKEVDGKIVLQGTLLNTYVCTILIRTTMEVAFIVGQYLLYGIFLDTLHVCRRSPCPHPVNCYVSRPTEKNVFIVFMMAVAGLSLFLSLAELYHLGWKKIRQRFGKSRQGVDKHQLPGPPTSLVQSLTPPPDFNQCLKNSSGEKFFSDFSNNMGSRKNPDALATGEVPNQEQIPGEGFIHMHYSQKPEYASGASAGHRLPQGYHSDKRRLSKASSKARSDDLSV.

The Cytoplasmic segment spans residues 1 to 19; the sequence is MGDWSFLGEFLEEVHKHST. A helical membrane pass occupies residues 20–40; it reads VIGKVWLTVLFIFRMLVLGTA. The Extracellular segment spans residues 41 to 76; the sequence is AESSWGDEQADFRCDTIQPGCQNVCYDQAFPISHIR. The helical transmembrane segment at 77-97 threads the bilayer; the sequence is YWVLQIIFVSTPSLVYMGHAM. The Cytoplasmic portion of the chain corresponds to 98–164; sequence HTVRMQEKQK…CTILIRTTME (67 aa). A helical transmembrane segment spans residues 165–185; sequence VAFIVGQYLLYGIFLDTLHVC. Residues 186-205 lie on the Extracellular side of the membrane; the sequence is RRSPCPHPVNCYVSRPTEKN. A helical membrane pass occupies residues 206–226; that stretch reads VFIVFMMAVAGLSLFLSLAEL. Topologically, residues 227–358 are cytoplasmic; the sequence is YHLGWKKIRQ…SKARSDDLSV (132 aa). 2 disordered regions span residues 242-262 and 318-358; these read RQGV…QSLT and SQKP…DLSV. Residues S353 and S357 each carry the phosphoserine modification.

Belongs to the connexin family. Alpha-type (group II) subfamily. A connexon is composed of a hexamer of connexins. In terms of tissue distribution, abundantly expressed in the lung, also expressed in the kidney and heart.

The protein resides in the cell membrane. The protein localises to the cell junction. Its subcellular location is the gap junction. Its function is as follows. One gap junction consists of a cluster of closely packed pairs of transmembrane channels, the connexons, through which materials of low MW diffuse from one cell to a neighboring cell. This is Gap junction alpha-5 protein (Gja5) from Mus musculus (Mouse).